A 307-amino-acid chain; its full sequence is tRNA dimethylallyltransferase (307 aa).

Position 9-16 (9-16) interacts with ATP; that stretch reads GPTAVGKT. 11–16 provides a ligand contact to substrate; it reads TAVGKT. The tract at residues 34-37 is interaction with substrate tRNA; it reads DSMQ.

It belongs to the IPP transferase family. Monomer. Mg(2+) is required as a cofactor.

It catalyses the reaction adenosine(37) in tRNA + dimethylallyl diphosphate = N(6)-dimethylallyladenosine(37) in tRNA + diphosphate. Catalyzes the transfer of a dimethylallyl group onto the adenine at position 37 in tRNAs that read codons beginning with uridine, leading to the formation of N6-(dimethylallyl)adenosine (i(6)A). This is tRNA dimethylallyltransferase from Levilactobacillus brevis (strain ATCC 367 / BCRC 12310 / CIP 105137 / JCM 1170 / LMG 11437 / NCIMB 947 / NCTC 947) (Lactobacillus brevis).